A 931-amino-acid chain; its full sequence is Bifunctional glutamine synthetase adenylyltransferase/adenylyl-removing enzyme (931 aa).

The adenylyl removase stretch occupies residues 1–434 (MTLAPADLPA…STEFAALLAP (434 aa)). Residues 441 to 931 (PDALANYWRS…ACIAAELPFA (491 aa)) form an adenylyl transferase region.

It belongs to the GlnE family. Requires Mg(2+) as cofactor.

It catalyses the reaction [glutamine synthetase]-O(4)-(5'-adenylyl)-L-tyrosine + phosphate = [glutamine synthetase]-L-tyrosine + ADP. It carries out the reaction [glutamine synthetase]-L-tyrosine + ATP = [glutamine synthetase]-O(4)-(5'-adenylyl)-L-tyrosine + diphosphate. Its function is as follows. Involved in the regulation of glutamine synthetase GlnA, a key enzyme in the process to assimilate ammonia. When cellular nitrogen levels are high, the C-terminal adenylyl transferase (AT) inactivates GlnA by covalent transfer of an adenylyl group from ATP to specific tyrosine residue of GlnA, thus reducing its activity. Conversely, when nitrogen levels are low, the N-terminal adenylyl removase (AR) activates GlnA by removing the adenylyl group by phosphorolysis, increasing its activity. The regulatory region of GlnE binds the signal transduction protein PII (GlnB) which indicates the nitrogen status of the cell. The chain is Bifunctional glutamine synthetase adenylyltransferase/adenylyl-removing enzyme from Stenotrophomonas maltophilia (strain R551-3).